A 172-amino-acid polypeptide reads, in one-letter code: Lipoprotein signal peptidase (172 aa).

Transmembrane regions (helical) follow at residues 10 to 30 (LIWLLLSVLVVGLDQWSKAWV), 68 to 88 (WQLWFFTALAVGISGLLAFWL), and 98 to 118 (SALPYALVIGGAIGNVIDRLM). Residues D124 and D142 contribute to the active site. The chain crosses the membrane as a helical span at residues 138-158 (FNIADSAIVGGAIGIAVFGLF).

This sequence belongs to the peptidase A8 family.

Its subcellular location is the cell inner membrane. It catalyses the reaction Release of signal peptides from bacterial membrane prolipoproteins. Hydrolyzes -Xaa-Yaa-Zaa-|-(S,diacylglyceryl)Cys-, in which Xaa is hydrophobic (preferably Leu), and Yaa (Ala or Ser) and Zaa (Gly or Ala) have small, neutral side chains.. It functions in the pathway protein modification; lipoprotein biosynthesis (signal peptide cleavage). Functionally, this protein specifically catalyzes the removal of signal peptides from prolipoproteins. The polypeptide is Lipoprotein signal peptidase (Xanthomonas euvesicatoria pv. vesicatoria (strain 85-10) (Xanthomonas campestris pv. vesicatoria)).